A 351-amino-acid chain; its full sequence is NADP-dependent isopropanol dehydrogenase (351 aa).

4 residues coordinate Zn(2+): C37, H59, E60, and D150. Residues I175–V178, G198–R200, Y218, I265–Y267, and K340 each bind NADP(+).

It belongs to the zinc-containing alcohol dehydrogenase family. Homotetramer. Zn(2+) serves as cofactor.

It catalyses the reaction propan-2-ol + NADP(+) = acetone + NADPH + H(+). Alcohol dehydrogenase with a preference for medium chain secondary alcohols, such as 2-butanol and isopropanol. Has very low activity with primary alcohols, such as ethanol. Under physiological conditions, the enzyme reduces aldehydes and 2-ketones to produce secondary alcohols. Is active with acetaldehyde and propionaldehyde. This chain is NADP-dependent isopropanol dehydrogenase (adh), found in Clostridium beijerinckii (Clostridium MP).